Here is a 144-residue protein sequence, read N- to C-terminus: Transcriptional regulator SlyA (144 aa).

In terms of domain architecture, HTH marR-type spans 2 to 135 (ESPLGSDLAR…LIKLVAKLEH (134 aa)). A DNA-binding region (H-T-H motif) is located at residues 49-72 (QIQLAKAIGIEQPSLVRTLDQLED).

It belongs to the SlyA family. In terms of assembly, homodimer.

Functionally, transcription regulator that can specifically activate or repress expression of target genes. Required to activate expression of virulent genes. This chain is Transcriptional regulator SlyA, found in Salmonella choleraesuis (strain SC-B67).